A 431-amino-acid chain; its full sequence is Glucose-1-phosphate adenylyltransferase (431 aa).

Residue Lys39 coordinates beta-D-fructose 1,6-bisphosphate. AMP-binding residues include Arg40, His46, and Arg52. Tyr114 contacts alpha-D-glucose 1-phosphate. Arg130 lines the AMP pocket. Residues Gly179, 194–195 (EK), and Ser212 contribute to the alpha-D-glucose 1-phosphate site. AMP-binding residues include Glu370 and Arg386. Residues 419-423 (REMLR) and 429-431 (QER) each bind beta-D-fructose 1,6-bisphosphate.

Belongs to the bacterial/plant glucose-1-phosphate adenylyltransferase family. Homotetramer.

It carries out the reaction alpha-D-glucose 1-phosphate + ATP + H(+) = ADP-alpha-D-glucose + diphosphate. It participates in glycan biosynthesis; glycogen biosynthesis. Allosterically activated by fructose-1,6-bisphosphate (F16BP) and inhibited by AMP. Involved in the biosynthesis of ADP-glucose, a building block required for the elongation reactions to produce glycogen. Catalyzes the reaction between ATP and alpha-D-glucose 1-phosphate (G1P) to produce pyrophosphate and ADP-Glc. The chain is Glucose-1-phosphate adenylyltransferase from Shigella boydii serotype 18 (strain CDC 3083-94 / BS512).